Here is a 520-residue protein sequence, read N- to C-terminus: MTMWQFKSYFKHHLVFWKDRFLHSSEKQMQRRSILSSVVLIILSFLISFLLIISIPGGRGASFFALFTKLFLDNTNTENFLRQIAIYILAGLAFSFCMSVGIFNIGISGQMMAGAIFGFLMILKVFPSSFRPGFGGQIITVLLMVIGSVSVAVVVATLKIFFKVNEVVSAIMLNWIVVLISAYLVETYIKDNSGGTAQFFSLPLPDEFALYNFSPLTKKFGWLASLIIAFISVIIVAVVLKYTVFGHKLKSIGSSVFGSQAMGFNVRKYQFLSFIISGILSGLLATVVYTASTEKVLTFNNVGDSAISAVPATGFDGIAIGLIALNNPFRIVIVSVLIAFVNIGARPANLNPNTASLVLGIMMYFAALYNLMVYFKPWRYLVKLNIGKINLTTYETYENKLAANLEWLSFQRFLSKQKKKNDKTKFNWFDTSLFEQYAKNKQEIVQEYHHNCATNLIAWWLNAIQSGNIKPSTTFKLEFVNFKHQQKFVLNWFKNESESLRDFQSQFERINKLVEREFVK.

The next 9 membrane-spanning stretches (helical) occupy residues 38–58 (VVLI…IPGG), 84–104 (IAIY…GIFN), 105–125 (IGIS…ILKV), 138–158 (IITV…VATL), 167–187 (VVSA…LVET), 220–240 (FGWL…AVVL), 271–291 (FLSF…VYTA), 318–338 (IAIG…SVLI), and 355–375 (ASLV…MVYF).

It is found in the cell membrane. This is an uncharacterized protein from Mycoplasma genitalium (strain ATCC 33530 / DSM 19775 / NCTC 10195 / G37) (Mycoplasmoides genitalium).